Here is a 226-residue protein sequence, read N- to C-terminus: Thymidylate kinase (226 aa).

12-19 is a binding site for ATP; it reads GIDGAGKS.

This sequence belongs to the thymidylate kinase family.

The enzyme catalyses dTMP + ATP = dTDP + ADP. Functionally, phosphorylation of dTMP to form dTDP in both de novo and salvage pathways of dTTP synthesis. This chain is Thymidylate kinase, found in Verminephrobacter eiseniae (strain EF01-2).